The chain runs to 496 residues: Transcription termination/antitermination protein NusA (496 aa).

Positions 135–200 (GQIITGIVKK…RGAQLFISRS (66 aa)) constitute an S1 motif domain. Residues 302 to 370 (CHTMDIAVDI…KNLNINENII (69 aa)) enclose the KH domain. Tandem repeats lie at residues 364 to 414 (NINE…KSKL) and 440 to 490 (GMNA…RNIC). The segment at 364–490 (NINENIIKIL…LLIMTARNIC (127 aa)) is 2 X 51 AA approximate repeats.

Belongs to the NusA family. In terms of assembly, monomer. Binds directly to the core enzyme of the DNA-dependent RNA polymerase and to nascent RNA.

The protein localises to the cytoplasm. Functionally, participates in both transcription termination and antitermination. This is Transcription termination/antitermination protein NusA from Buchnera aphidicola subsp. Acyrthosiphon pisum (strain APS) (Acyrthosiphon pisum symbiotic bacterium).